The following is a 35-amino-acid chain: Manganese peroxidase (35 aa).

Over residues 1-11 (LSLLGHDERVT) the composition is skewed to basic and acidic residues. A disordered region spans residues 1–35 (LSLLGHDERVTPEPFDSVTAQNARGNQADVQSLPR). The span at 18-35 (VTAQNARGNQADVQSLPR) shows a compositional bias: polar residues.

The protein belongs to the peroxidase family. It depends on heme b as a cofactor. The cofactor is Ca(2+).

The enzyme catalyses 2 Mn(2+) + H2O2 + 2 H(+) = 2 Mn(3+) + 2 H2O. Has manganese peroxidase activity. This is Manganese peroxidase from Irpex lacteus (Milk-white toothed polypore).